The primary structure comprises 306 residues: Acetyl-coenzyme A carboxylase carboxyl transferase subunit beta (306 aa).

The 270-residue stretch at 27–296 folds into the CoA carboxyltransferase N-terminal domain; sequence LWHKCPSCEA…PEFVAAPVEP (270 aa). Zn(2+)-binding residues include Cys31, Cys34, Cys50, and Cys53. The segment at 31–53 adopts a C4-type zinc-finger fold; it reads CPSCEAVLYRPELEKTLDVCPKC.

Belongs to the AccD/PCCB family. As to quaternary structure, acetyl-CoA carboxylase is a heterohexamer composed of biotin carboxyl carrier protein (AccB), biotin carboxylase (AccC) and two subunits each of ACCase subunit alpha (AccA) and ACCase subunit beta (AccD). Requires Zn(2+) as cofactor.

It localises to the cytoplasm. It catalyses the reaction N(6)-carboxybiotinyl-L-lysyl-[protein] + acetyl-CoA = N(6)-biotinyl-L-lysyl-[protein] + malonyl-CoA. It functions in the pathway lipid metabolism; malonyl-CoA biosynthesis; malonyl-CoA from acetyl-CoA: step 1/1. Its function is as follows. Component of the acetyl coenzyme A carboxylase (ACC) complex. Biotin carboxylase (BC) catalyzes the carboxylation of biotin on its carrier protein (BCCP) and then the CO(2) group is transferred by the transcarboxylase to acetyl-CoA to form malonyl-CoA. This chain is Acetyl-coenzyme A carboxylase carboxyl transferase subunit beta, found in Pseudomonas fluorescens (strain ATCC BAA-477 / NRRL B-23932 / Pf-5).